The primary structure comprises 402 residues: Nodulation protein E (402 aa).

Residues 2–401 enclose the Ketosynthase family 3 (KS3) domain; the sequence is DRRVVITGMG…GTNAVLAFKQ (400 aa). Catalysis depends on for beta-ketoacyl synthase activity residues cysteine 162, histidine 294, and histidine 331. Residues 329-348 traverse the membrane as a helical segment; that stretch reads HAHCIGAASALEMIACVMAI.

This sequence belongs to the thiolase-like superfamily. Beta-ketoacyl-ACP synthases family.

Its subcellular location is the cell inner membrane. Functionally, proposed to synthesize NOD factor fatty acyl chain. Involved in the synthesis of a highly unsaturated fatty acid moiety, which forms part of a lipo-oligosaccharide that is responsible for host specificity. This is Nodulation protein E (nodE) from Rhizobium meliloti (strain 1021) (Ensifer meliloti).